A 141-amino-acid polypeptide reads, in one-letter code: Nucleoside diphosphate kinase (141 aa).

ATP contacts are provided by Lys-11, Phe-59, Arg-87, Thr-93, Arg-104, and Asn-114. His-117 (pros-phosphohistidine intermediate) is an active-site residue.

This sequence belongs to the NDK family. In terms of assembly, homotetramer. Mg(2+) is required as a cofactor.

The protein localises to the cytoplasm. The catalysed reaction is a 2'-deoxyribonucleoside 5'-diphosphate + ATP = a 2'-deoxyribonucleoside 5'-triphosphate + ADP. The enzyme catalyses a ribonucleoside 5'-diphosphate + ATP = a ribonucleoside 5'-triphosphate + ADP. Functionally, major role in the synthesis of nucleoside triphosphates other than ATP. The ATP gamma phosphate is transferred to the NDP beta phosphate via a ping-pong mechanism, using a phosphorylated active-site intermediate. The protein is Nucleoside diphosphate kinase of Pseudomonas fluorescens (strain SBW25).